The sequence spans 156 residues: MSSNKINKKSIARIAAVQAIYQNILQNNDDMDDIMQNVLSFYQNNNAITDLPENLKISLSISHFKMLVKSVFENIHKLDEIIDNHLTNDKDPAHMPILLRALLRVSICELLFCPTTPAKVVINEYTDIANDMLNEHEIGFVNSVLDKIAKEHTRLI.

The protein belongs to the NusB family.

Involved in transcription antitermination. Required for transcription of ribosomal RNA (rRNA) genes. Binds specifically to the boxA antiterminator sequence of the ribosomal RNA (rrn) operons. The sequence is that of Transcription antitermination protein NusB from Rickettsia conorii (strain ATCC VR-613 / Malish 7).